Here is a 64-residue protein sequence, read N- to C-terminus: Large ribosomal subunit protein bL28 (64 aa).

The protein belongs to the bacterial ribosomal protein bL28 family.

In Campylobacter jejuni subsp. jejuni serotype O:6 (strain 81116 / NCTC 11828), this protein is Large ribosomal subunit protein bL28.